The following is a 246-amino-acid chain: DNA polymerase sliding clamp (246 aa).

The protein belongs to the PCNA family. In terms of assembly, homotrimer. The subunits circularize to form a toroid; DNA passes through its center. Replication factor C (RFC) is required to load the toroid on the DNA.

Its function is as follows. Sliding clamp subunit that acts as a moving platform for DNA processing. Responsible for tethering the catalytic subunit of DNA polymerase and other proteins to DNA during high-speed replication. The chain is DNA polymerase sliding clamp from Thermoplasma volcanium (strain ATCC 51530 / DSM 4299 / JCM 9571 / NBRC 15438 / GSS1).